Consider the following 695-residue polypeptide: Elongation factor G 1 (695 aa).

Residues 6-282 (STFRNIGISA…AITYYLPDPT (277 aa)) enclose the tr-type G domain. GTP-binding positions include 15–22 (AHIDSGKT), 82–86 (DTPGH), and 136–139 (NKCD).

This sequence belongs to the TRAFAC class translation factor GTPase superfamily. Classic translation factor GTPase family. EF-G/EF-2 subfamily.

It localises to the cytoplasm. Its function is as follows. Catalyzes the GTP-dependent ribosomal translocation step during translation elongation. During this step, the ribosome changes from the pre-translocational (PRE) to the post-translocational (POST) state as the newly formed A-site-bound peptidyl-tRNA and P-site-bound deacylated tRNA move to the P and E sites, respectively. Catalyzes the coordinated movement of the two tRNA molecules, the mRNA and conformational changes in the ribosome. The protein is Elongation factor G 1 (fusA) of Treponema pallidum (strain Nichols).